The following is a 72-amino-acid chain: PI-stichotoxin-Hmg3d (72 aa).

A signal peptide spans 1–14 (GFYFRSIQGFYFKR). The BPTI/Kunitz inhibitor domain occupies 20–70 (CSEPKKVGRCRGSFPRFYFDSETGKCTPFIYGGCGGNGNNFETLRRCRAIC). Cystine bridges form between Cys20–Cys70, Cys29–Cys53, and Cys45–Cys66.

The protein belongs to the venom Kunitz-type family. Sea anemone type 2 potassium channel toxin subfamily.

The protein localises to the secreted. Its subcellular location is the nematocyst. Its function is as follows. Serine protease inhibitor that inhibits trypsin (Ki=50 nM). This protease exhibits a pronounced neuroprotective activity on Alzheimer's disease model. It enhances cell viability by 39.4% when neuroblastoma cells are in presence of the toxin component beta-amyloid, but has no effect when these cells are in presence of 6-OHDA. It induces an effective decrease of reactive oxygen species (ROS) level in the cells treated with oxidative stress inducers. It also protects these cells by inhibiting ATP-induced purinoceptor activation. Its binding affinity to P2RX7 is moderate (Kd=43.3 uM). This chain is PI-stichotoxin-Hmg3d, found in Heteractis magnifica (Magnificent sea anemone).